The primary structure comprises 347 residues: P2Y purinoceptor 12 (347 aa).

Residues 1–33 (MDVPGVNTTSANTTFSPGTSTLCVRDYKITQVL) lie on the Extracellular side of the membrane. N-linked (GlcNAc...) asparagine glycans are attached at residues Asn-7 and Asn-12. 2 disulfides stabilise this stretch: Cys-23/Cys-276 and Cys-103/Cys-181. Residues 34–56 (FPLLYTVLFFAGLITNSLAMRIF) traverse the membrane as a helical segment. At 57 to 67 (FQIRSKSNFII) the chain is on the cytoplasmic side. A phosphoserine mark is found at Ser-61 and Ser-63. The chain crosses the membrane as a helical span at residues 68–88 (FLKNTVISDLLMILTFPFKIL). Residues 89–103 (SDAKLGAGPLRTLVC) lie on the Extracellular side of the membrane. Residues Arg-99, Cys-103, and Tyr-111 each coordinate ADP. The helical transmembrane segment at 104 to 124 (QVTSVTFYFTMYISISFLGLI) threads the bilayer. Topologically, residues 125–148 (TIDRYLKTTRPFKTSSPSNLLGAK) are cytoplasmic. The helical transmembrane segment at 149-168 (ILSVVIWAFMFLISLPNMIL) threads the bilayer. Residues 162-165 (SLPN), 181-185 (CSFLK), His-193, and Asn-197 contribute to the ADP site. At 169–191 (TNRRPKDKDVTKCSFLKSEFGLV) the chain is on the extracellular side. The helical transmembrane segment at 192-213 (WHEIVNYICQVIFWINFLIVIV) threads the bilayer. Topologically, residues 214–239 (CYSLITKELYRSYVRTRGSAKVPKKK) are cytoplasmic. A helical membrane pass occupies residues 240–265 (VNVKVFIIIAVFFICFVPFHFARIPY). ADP-binding positions include 262–265 (RIPY), Gln-269, and Lys-286. The Extracellular portion of the chain corresponds to 266 to 284 (TLSQTRAVFDCSAENTLFY). Residues 285–304 (VKESTLWLTSLNACLDPFIY) form a helical membrane-spanning segment. Over 305–347 (FFLCKSFRNSLTSMLRCSNSTSTSGTNKKKGQEGGEPSEETPM) the chain is Cytoplasmic. Residues 321–347 (CSNSTSTSGTNKKKGQEGGEPSEETPM) form a disordered region.

The protein belongs to the G-protein coupled receptor 1 family.

It localises to the cell membrane. Its function is as follows. Receptor for ADP and ATP coupled to G-proteins that inhibit the adenylyl cyclase second messenger system. Required for normal platelet aggregation and blood coagulation. In Mus musculus (Mouse), this protein is P2Y purinoceptor 12 (P2ry12).